Reading from the N-terminus, the 205-residue chain is MKELKQAEQIRTWVQSILTDESSGHDWHHVSRVADLAAYIGEKEKADLFIVETAALVHDLIDVKLPDTVRLSVSEVYDQLVFFGVGKENADRVIHIITRMSFRDRGKLAKEPLSIEGKAVQDADRLDAIGAVGIARAFMFAGAKGHGLYGDEQSAYAHFFHKLLRLKDMMNTDTARELAEERHNFMLQFVRQLEKDIPGIDAETS.

The region spanning 26 to 129 (DWHHVSRVAD…VQDADRLDAI (104 aa)) is the HD domain.

This is an uncharacterized protein from Bacillus subtilis (strain 168).